A 388-amino-acid chain; its full sequence is tRNA(Ile)-lysidine synthase (388 aa).

Residue 51–56 (SGGRDS) coordinates ATP.

This sequence belongs to the tRNA(Ile)-lysidine synthase family.

It is found in the cytoplasm. The enzyme catalyses cytidine(34) in tRNA(Ile2) + L-lysine + ATP = lysidine(34) in tRNA(Ile2) + AMP + diphosphate + H(+). In terms of biological role, ligates lysine onto the cytidine present at position 34 of the AUA codon-specific tRNA(Ile) that contains the anticodon CAU, in an ATP-dependent manner. Cytidine is converted to lysidine, thus changing the amino acid specificity of the tRNA from methionine to isoleucine. This is tRNA(Ile)-lysidine synthase from Bifidobacterium longum (strain DJO10A).